Reading from the N-terminus, the 285-residue chain is Phosphatidylglycerol--prolipoprotein diacylglyceryl transferase (285 aa).

Helical transmembrane passes span 30-50 (LEIR…HWHI), 67-87 (LMLW…ILLY), 103-123 (WHGG…VSIV), and 129-149 (VRVM…LFLG). A 1,2-diacyl-sn-glycero-3-phospho-(1'-sn-glycerol) is bound at residue arginine 150. The next 3 helical transmembrane spans lie at 184–204 (SQVY…SILA), 213–233 (FGVL…AVEF), and 252–272 (GQVL…LTVL).

The protein belongs to the Lgt family.

The protein resides in the cell inner membrane. It catalyses the reaction L-cysteinyl-[prolipoprotein] + a 1,2-diacyl-sn-glycero-3-phospho-(1'-sn-glycerol) = an S-1,2-diacyl-sn-glyceryl-L-cysteinyl-[prolipoprotein] + sn-glycerol 1-phosphate + H(+). The protein operates within protein modification; lipoprotein biosynthesis (diacylglyceryl transfer). In terms of biological role, catalyzes the transfer of the diacylglyceryl group from phosphatidylglycerol to the sulfhydryl group of the N-terminal cysteine of a prolipoprotein, the first step in the formation of mature lipoproteins. This is Phosphatidylglycerol--prolipoprotein diacylglyceryl transferase from Anaplasma marginale (strain Florida).